The following is a 432-amino-acid chain: Enolase (432 aa).

Residue Q167 coordinates (2R)-2-phosphoglycerate. The active-site Proton donor is the E209. The Mg(2+) site is built by D246, E291, and D318. K343, R372, S373, and K394 together coordinate (2R)-2-phosphoglycerate. The Proton acceptor role is filled by K343.

Belongs to the enolase family. As to quaternary structure, component of the RNA degradosome, a multiprotein complex involved in RNA processing and mRNA degradation. Mg(2+) serves as cofactor.

Its subcellular location is the cytoplasm. The protein localises to the secreted. The protein resides in the cell surface. The catalysed reaction is (2R)-2-phosphoglycerate = phosphoenolpyruvate + H2O. It functions in the pathway carbohydrate degradation; glycolysis; pyruvate from D-glyceraldehyde 3-phosphate: step 4/5. Functionally, catalyzes the reversible conversion of 2-phosphoglycerate (2-PG) into phosphoenolpyruvate (PEP). It is essential for the degradation of carbohydrates via glycolysis. The polypeptide is Enolase (Aliivibrio fischeri (strain ATCC 700601 / ES114) (Vibrio fischeri)).